Reading from the N-terminus, the 548-residue chain is Chaperonin GroEL (548 aa).

ATP-binding positions include T29 to P32, K50, D86 to T90, G414, N478 to A480, and D494.

It belongs to the chaperonin (HSP60) family. Forms a cylinder of 14 subunits composed of two heptameric rings stacked back-to-back. Interacts with the co-chaperonin GroES.

It is found in the cytoplasm. The enzyme catalyses ATP + H2O + a folded polypeptide = ADP + phosphate + an unfolded polypeptide.. In terms of biological role, together with its co-chaperonin GroES, plays an essential role in assisting protein folding. The GroEL-GroES system forms a nano-cage that allows encapsulation of the non-native substrate proteins and provides a physical environment optimized to promote and accelerate protein folding. Its function is as follows. May play a protective role against the defense mechanisms generated by the infected macrophages. In Legionella pneumophila subsp. pneumophila (strain Philadelphia 1 / ATCC 33152 / DSM 7513), this protein is Chaperonin GroEL.